The chain runs to 274 residues: Thiamine kinase (274 aa).

Belongs to the thiamine kinase family.

It carries out the reaction thiamine + ATP = thiamine phosphate + ADP + H(+). The protein operates within cofactor biosynthesis; thiamine diphosphate biosynthesis; thiamine phosphate from thiamine: step 1/1. Its function is as follows. Catalyzes the ATP-dependent phosphorylation of thiamine to thiamine phosphate. Is involved in thiamine salvage. This Escherichia coli (strain K12 / MC4100 / BW2952) protein is Thiamine kinase.